The primary structure comprises 106 residues: Cytochrome c (106 aa).

3 residues coordinate heme c: C17, C20, and H21. N6,N6,N6-trimethyllysine is present on K75. M83 serves as a coordination point for heme c.

The protein belongs to the cytochrome c family. Post-translationally, binds 1 heme c group covalently per subunit.

It localises to the mitochondrion intermembrane space. Electron carrier protein. The oxidized form of the cytochrome c heme group can accept an electron from the heme group of the cytochrome c1 subunit of cytochrome reductase. Cytochrome c then transfers this electron to the cytochrome oxidase complex, the final protein carrier in the mitochondrial electron-transport chain. In Gibberella zeae (strain ATCC MYA-4620 / CBS 123657 / FGSC 9075 / NRRL 31084 / PH-1) (Wheat head blight fungus), this protein is Cytochrome c (CYC1).